The chain runs to 337 residues: Probable E3 ubiquitin-protein ligase LUL1 (337 aa).

G2 carries the N-myristoyl glycine lipid modification. A DAR2 domain region spans residues 139 to 255 (FTFDASMPGR…GEIKIEVVKQ (117 aa)). Residues 285-324 (CVVCLSEPRDTTVLPCRHMCMCSGCAKALRFQTNLCPVCR) form an RING-type; atypical zinc finger.

The protein belongs to the RING-type zinc finger family. LOG2 subfamily. Post-translationally, myristoylated (in vitro).

The enzyme catalyses S-ubiquitinyl-[E2 ubiquitin-conjugating enzyme]-L-cysteine + [acceptor protein]-L-lysine = [E2 ubiquitin-conjugating enzyme]-L-cysteine + N(6)-ubiquitinyl-[acceptor protein]-L-lysine.. Its pathway is protein modification; protein ubiquitination. Its function is as follows. Acts as an E3 ubiquitin-protein ligase, or as part of E3 complex, which accepts ubiquitin from specific E2 ubiquitin-conjugating enzymes and then transfers it to substrates (in vitro). This is Probable E3 ubiquitin-protein ligase LUL1 (LUL1) from Arabidopsis thaliana (Mouse-ear cress).